Here is a 578-residue protein sequence, read N- to C-terminus: PTS system fructose-specific EIIB'BC component (578 aa).

2 PTS EIIB type-2 domains span residues Met-1–Ala-99 and Val-119–Ala-214. Cys-125 acts as the Phosphocysteine intermediate; for EIIB activity in catalysis. Cys-125 carries the post-translational modification Phosphocysteine; by EIIA. The region spanning Pro-241 to Ala-576 is the PTS EIIC type-2 domain. Transmembrane regions (helical) follow at residues Tyr-251–Ile-271, Leu-284–Ile-304, Ile-319–Phe-339, Val-364–Gly-384, Asn-405–Ile-425, Ala-428–Ala-450, Ala-477–Ala-497, Leu-518–Ile-538, and Leu-545–Ala-565.

Its subcellular location is the cell inner membrane. It carries out the reaction D-fructose(out) + N(pros)-phospho-L-histidyl-[protein] = D-fructose 1-phosphate(in) + L-histidyl-[protein]. The phosphoenolpyruvate-dependent sugar phosphotransferase system (sugar PTS), a major carbohydrate active transport system, catalyzes the phosphorylation of incoming sugar substrates concomitantly with their translocation across the cell membrane. The enzyme II FruAB PTS system is involved in fructose transport. The sequence is that of PTS system fructose-specific EIIB'BC component from Rhodobacter capsulatus (Rhodopseudomonas capsulata).